The chain runs to 225 residues: UPF0758 protein SEQ_1136 (225 aa).

One can recognise an MPN domain in the interval 102–224; that stretch reads PVLSSAQVAE…YYSFREKSDL (123 aa). Residues His-173, His-175, and Asp-186 each contribute to the Zn(2+) site. The short motif at 173–186 is the JAMM motif element; that stretch reads HNHPSGLTKPSAND.

This sequence belongs to the UPF0758 family.

The polypeptide is UPF0758 protein SEQ_1136 (Streptococcus equi subsp. equi (strain 4047)).